A 257-amino-acid chain; its full sequence is Large ribosomal subunit protein uL2 (257 aa).

Positions 207 to 231 (VEHPFGGGNHQHIGKPSTIRRDAPA) are disordered.

It belongs to the universal ribosomal protein uL2 family. In terms of assembly, component of the large ribosomal subunit.

The protein resides in the cytoplasm. Functionally, component of the large ribosomal subunit. The ribosome is a large ribonucleoprotein complex responsible for the synthesis of proteins in the cell. The chain is Large ribosomal subunit protein uL2 (rpl8) from Xenopus tropicalis (Western clawed frog).